The primary structure comprises 293 residues: Coatomer subunit epsilon-2 (293 aa).

The protein belongs to the COPE family. Oligomeric complex that consists of at least the alpha, beta, beta', gamma, delta, epsilon and zeta subunits.

Its subcellular location is the cytoplasm. The protein resides in the golgi apparatus membrane. It localises to the cytoplasmic vesicle. The protein localises to the COPI-coated vesicle membrane. Functionally, the coatomer is a cytosolic protein complex that binds to dilysine motifs and reversibly associates with Golgi non-clathrin-coated vesicles, which further mediate biosynthetic protein transport from the ER, via the Golgi up to the trans Golgi network. The coatomer complex is required for budding from Golgi membranes, and is essential for the retrograde Golgi-to-ER transport of dilysine-tagged proteins. The protein is Coatomer subunit epsilon-2 of Arabidopsis thaliana (Mouse-ear cress).